Consider the following 206-residue polypeptide: N-(5'-phosphoribosyl)anthranilate isomerase (206 aa).

It belongs to the TrpF family.

It carries out the reaction N-(5-phospho-beta-D-ribosyl)anthranilate = 1-(2-carboxyphenylamino)-1-deoxy-D-ribulose 5-phosphate. It participates in amino-acid biosynthesis; L-tryptophan biosynthesis; L-tryptophan from chorismate: step 3/5. The polypeptide is N-(5'-phosphoribosyl)anthranilate isomerase (Azotobacter vinelandii (strain DJ / ATCC BAA-1303)).